Consider the following 757-residue polypeptide: LPS-assembly protein LptD (757 aa).

Residues 1–20 (MLQRFITSLMLLPFPGSALA) form the signal peptide.

It belongs to the LptD family. As to quaternary structure, component of the lipopolysaccharide transport and assembly complex. Interacts with LptE and LptA.

Its subcellular location is the cell outer membrane. In terms of biological role, together with LptE, is involved in the assembly of lipopolysaccharide (LPS) at the surface of the outer membrane. This Idiomarina loihiensis (strain ATCC BAA-735 / DSM 15497 / L2-TR) protein is LPS-assembly protein LptD.